The following is a 248-amino-acid chain: Mannose-binding protein C (248 aa).

Positions 1-20 are cleaved as a signal peptide; that stretch reads MSLFPSLPLLLLSVVATSYS. A Collagen-like domain is found at 42–99; the sequence is GINGFPGKDGRDGTKGEKGEPGQGLRGLQGPPGKLGPPGNPGPSGSPGPKGQKGDPGE. The tract at residues 43 to 111 is disordered; the sequence is INGFPGKDGR…DCDSSLAASE (69 aa). Proline 47 carries the post-translational modification 4-hydroxyproline. Positions 49 to 61 are enriched in basic and acidic residues; that stretch reads KDGRDGTKGEKGE. A 4-hydroxyproline mark is found at proline 73, proline 79, proline 82, and proline 88. A compositionally biased stretch (pro residues) spans 75–87; it reads KLGPPGNPGPSGS. Residues 112–130 adopt a coiled-coil conformation; that stretch reads RKALQTEMAHIKKWLTFSL. The 112-residue stretch at 134 to 245 folds into the C-type lectin domain; the sequence is VGNKFFLTNG…CSSSHLALCE (112 aa). 2 cysteine pairs are disulfide-bonded: cysteine 155–cysteine 244 and cysteine 222–cysteine 236.

In terms of assembly, oligomeric complex of 3 or more homotrimers. Interacts with MASP1 and MASP2. Interacts with MEP1A and MEP1B and may inhibit their catalytic activity. Hydroxylation on proline residues within the sequence motif, GXPG, is most likely to be 4-hydroxy as this fits the requirement for 4-hydroxylation in vertebrates.

It is found in the secreted. In terms of biological role, calcium-dependent lectin involved in innate immune defense. Binds mannose, fucose and N-acetylglucosamine on different microorganisms and activates the lectin complement pathway. Binds to late apoptotic cells, as well as to apoptotic blebs and to necrotic cells, but not to early apoptotic cells, facilitating their uptake by macrophages. In Trachypithecus obscurus (Dusky leaf-monkey), this protein is Mannose-binding protein C (MBL2).